We begin with the raw amino-acid sequence, 145 residues long: Putative transcriptional regulatory protein PYRAB13000 (145 aa).

Belongs to the Tfx family.

Functionally, putative transcriptional regulator. The sequence is that of Putative transcriptional regulatory protein PYRAB13000 from Pyrococcus abyssi (strain GE5 / Orsay).